The sequence spans 541 residues: Protein MGF 505-10R (541 aa).

Belongs to the asfivirus MGF 505 family.

Its function is as follows. Plays a role in virus cell tropism, and may be required for efficient virus replication in macrophages. This chain is Protein MGF 505-10R, found in Ornithodoros (relapsing fever ticks).